The chain runs to 335 residues: Tryptophan--tRNA ligase (335 aa).

Residues glutamine 19–serine 21 and glycine 28–asparagine 29 each bind ATP. A 'HIGH' region motif is present at residues proline 20–asparagine 29. Aspartate 143 provides a ligand contact to L-tryptophan. ATP contacts are provided by residues glycine 155–aspartate 157, isoleucine 192, and lysine 201–serine 205. The short motif at lysine 201–serine 205 is the 'KMSKS' region element.

The protein belongs to the class-I aminoacyl-tRNA synthetase family. In terms of assembly, homodimer.

It is found in the cytoplasm. The catalysed reaction is tRNA(Trp) + L-tryptophan + ATP = L-tryptophyl-tRNA(Trp) + AMP + diphosphate + H(+). Catalyzes the attachment of tryptophan to tRNA(Trp). The polypeptide is Tryptophan--tRNA ligase (Tropheryma whipplei (strain TW08/27) (Whipple's bacillus)).